Consider the following 631-residue polypeptide: Pescadillo homolog (631 aa).

The region spanning 321-414 is the BRCT domain; it reads RLRTLFKGLK…QLLPTNDYFL (94 aa). The span at 428–442 shows a compositional bias: basic and acidic residues; it reads SKRDSYIPPEEKALH. Disordered regions lie at residues 428 to 471 and 489 to 560; these read SKRD…EADQ and YKKY…EVDE. Phosphoserine is present on residues Ser453 and Ser457. Acidic residues-rich tracts occupy residues 453-471 and 498-525; these read SEEE…EADQ and VNED…EDVD. Basic and acidic residues predominate over residues 526 to 538; sequence EQTKRKQQEKEKM. Residues 544–553 are compositionally biased toward basic residues; sequence KVHKVNKRQV. Positions 593 to 629 form a coiled coil; that stretch reads LRKKRRNIDADTKEAKKAAKREARKLAAEAAARAAKL.

Belongs to the pescadillo family.

The protein localises to the nucleus. It is found in the nucleolus. The protein resides in the nucleoplasm. Functionally, required for maturation of ribosomal RNAs and formation of the large ribosomal subunit. The polypeptide is Pescadillo homolog (Drosophila persimilis (Fruit fly)).